A 478-amino-acid chain; its full sequence is Glycogen synthase (478 aa).

Position 15 (lysine 15) interacts with ADP-alpha-D-glucose.

This sequence belongs to the glycosyltransferase 1 family. Bacterial/plant glycogen synthase subfamily.

It carries out the reaction [(1-&gt;4)-alpha-D-glucosyl](n) + ADP-alpha-D-glucose = [(1-&gt;4)-alpha-D-glucosyl](n+1) + ADP + H(+). It functions in the pathway glycan biosynthesis; glycogen biosynthesis. Functionally, synthesizes alpha-1,4-glucan chains using ADP-glucose. The protein is Glycogen synthase of Bacillus cytotoxicus (strain DSM 22905 / CIP 110041 / 391-98 / NVH 391-98).